Reading from the N-terminus, the 318-residue chain is MELLSPPLRDIDLTGPDGSLCSFETADDFYDDPCFDSPDLRFFEDLDPRLVHMGALLKPEEHAHFPTAVHPGPGAREDEHVRAPSGHHQAGRCLLWACKACKRKTTNADRRKAATMRERRRLSKVNEAFETLKRCTSSNPNQRLPKVEILRNAIRYIEGLQALLRDQDAAPPGAAAFYAPGPLPPGRGSEHYSGDSDASSPRSNCSDGMMDYSGPPSGPRRQNGYDTAYYSEAARESRPGKSAAVSSLDCLSSIVERISTDSPAAPALLLADAPPESPPGPPEGASLSDTEQGTQTPSPDAAPQCPAGSNPNAIYQVL.

A Peptide (Met-Gly) (interchain with G-Cter in ubiquitin) cross-link involves residue Met-1. Lys-104 is subject to N6-methyllysine; by EHMT2. The bHLH domain occupies Asp-109–Leu-160. Disordered stretches follow at residues Ala-175–Tyr-225 and Ala-265–Leu-318. Positions Ser-196–Ser-206 are enriched in polar residues. The segment covering Ala-265–Pro-274 has biased composition (low complexity). Polar residues-rich tracts occupy residues Leu-287 to Ser-298 and Ala-307 to Leu-318.

As to quaternary structure, interacts with SUV39H1. Efficient DNA binding requires dimerization with another bHLH protein. Seems to form active heterodimers with ITF-2. Interacts with DDX5. Interacts with CHD2. Interacts with TSC22D3 isoform 1 and isoform 4. Interacts with SETD3. Interacts with P-TEFB complex; promotes the transcriptional activity of MYOD1 through its CDK9-mediated phosphorylation. Interacts with CSRP3. Interacts with NUPR1. Acetylated by a complex containing EP300 and PCAF. The acetylation is essential to activate target genes. Conversely, its deacetylation by SIRT1 inhibits its function. In terms of processing, ubiquitinated on the N-terminus; which is required for proteasomal degradation. Post-translationally, phosphorylated by CDK9. This phosphorylation promotes its function in muscle differentiation. Methylation at Lys-104 by EHMT2/G9a inhibits myogenic activity.

The protein resides in the nucleus. Functionally, acts as a transcriptional activator that promotes transcription of muscle-specific target genes and plays a role in muscle differentiation. Together with MYF5 and MYOG, co-occupies muscle-specific gene promoter core region during myogenesis. Induces fibroblasts to differentiate into myoblasts. Interacts with and is inhibited by the twist protein. This interaction probably involves the basic domains of both proteins. This is Myoblast determination protein 1 (Myod1) from Mus musculus (Mouse).